Consider the following 614-residue polypeptide: MNNLIKSKLELLPTSPGCYIHKDKNGTIIYVGKAKNLRNRVRSYFRGSHDTKTEALVSEIVDFEFIVTESNIEALLLEINLIKENKPKYNIMLKDDKSYPFIKITNERYPRLIITRQVKKDGSLYFGPYPDVGAANEIKRLLDRIFPFRKCTNPPSKVCFYYHIGQCMAHTICKKDEAYFKSMAQEVSDFLKGQDDKIIDDLKSKMAVAAQSMEFERAAEYRDLIQAIGTLRTKQRVMAKDLQNRDVFGYYVDKGWMCVQVFFVRQGKLIERDVNLFPYFNDPDEDFLTYVGQFYQEKSHLVPNEVLIPQDIDEEAVKALVDSKILKPQRGEKKQLVNLAIKNARVSLEQKFNLLEKSVEKTQGAIENLGRLLQIPTPVRIESFDNSNIMGTSPVSAMVVFVNGKPSKKDYRKYKIKTVVGPDDYASMREVIRRRYGRVQREALTPPDLIVIDGGQGQVNIAKQVIQEELGLDIPIAGLQKNDKHQTHELLFGDPLEVVDLSRNSQEFFLLQRIQDEVHRFAITFHRQLRSKNSFSSQLDGIDGLGPKRKQNLMRHFKSLTKIKEASVDEIVEVGVPRVVAEAVQRKLNPQGEALSQVAEERVDYQTEGNHNEP.

Residues 14 to 91 (TSPGCYIHKD…IKENKPKYNI (78 aa)) form the GIY-YIG domain. A UVR domain is found at 196 to 231 (DKIIDDLKSKMAVAAQSMEFERAAEYRDLIQAIGTL). The disordered stretch occupies residues 595–614 (LSQVAEERVDYQTEGNHNEP). Residues 599–614 (AEERVDYQTEGNHNEP) are compositionally biased toward basic and acidic residues.

The protein belongs to the UvrC family. In terms of assembly, interacts with UvrB in an incision complex.

The protein localises to the cytoplasm. Its function is as follows. The UvrABC repair system catalyzes the recognition and processing of DNA lesions. UvrC both incises the 5' and 3' sides of the lesion. The N-terminal half is responsible for the 3' incision and the C-terminal half is responsible for the 5' incision. This chain is UvrABC system protein C, found in Streptococcus pneumoniae serotype 2 (strain D39 / NCTC 7466).